Here is an 818-residue protein sequence, read N- to C-terminus: Cytosolic phospholipase A2 delta (818 aa).

Positions 5–124 (SPGGPPGHPY…LPGKLLRKTF (120 aa)) constitute a C2 domain. Positions 38, 44, 94, 96, and 102 each coordinate Ca(2+). The PLA2c domain occupies 273–818 (GCPEELAVHL…LEARPPRAQT (546 aa)). 330–331 (GG) provides a ligand contact to substrate. The active-site Nucleophile is the Ser-361. The active-site Proton acceptor is the Asp-647.

Ca(2+) serves as cofactor. As to expression, expressed in stratified squamous epithelia, such as those in skin and cervix, but not in other tissues. Strongly expressed in the upper spinous layer of the psoriatic epidermis, expressed weakly and discontinuously in atopic dermatitis and mycosis fungoides, and not detected in the epidermis of normal skin.

It localises to the cytoplasm. It is found in the cytosol. The protein resides in the membrane. The catalysed reaction is a 1,2-diacyl-sn-glycero-3-phosphocholine + H2O = a 1-acyl-sn-glycero-3-phosphocholine + a fatty acid + H(+). It catalyses the reaction 1-hexadecanoyl-2-(5Z,8Z,11Z,14Z-eicosatetraenoyl)-sn-glycero-3-phosphocholine + H2O = 1-hexadecanoyl-sn-glycero-3-phosphocholine + (5Z,8Z,11Z,14Z)-eicosatetraenoate + H(+). It carries out the reaction 1-hexadecanoyl-2-(9Z,12Z-octadecadienoyl)-sn-glycero-3-phosphocholine + H2O = (9Z,12Z)-octadecadienoate + 1-hexadecanoyl-sn-glycero-3-phosphocholine + H(+). The enzyme catalyses 1-hexadecanoyl-2-(9Z-octadecenoyl)-sn-glycero-3-phosphocholine + H2O = 1-hexadecanoyl-sn-glycero-3-phosphocholine + (9Z)-octadecenoate + H(+). The catalysed reaction is 1-hexadecanoyl-2-(5Z,8Z,11Z,14Z-eicosatetraenoyl)-sn-glycero-3-phosphoethanolamine + H2O = 1-hexadecanoyl-sn-glycero-3-phosphoethanolamine + (5Z,8Z,11Z,14Z)-eicosatetraenoate + H(+). It catalyses the reaction 1-hexadecanoyl-2-(9Z,12Z-octadecadienoyl)-sn-glycero-3-phosphoethanolamine + H2O = 1-hexadecanoyl-sn-glycero-3-phosphoethanolamine + (9Z,12Z)-octadecadienoate + H(+). It participates in lipid metabolism; fatty acid metabolism. With respect to regulation, stimulated by cytosolic Ca(2+). In terms of biological role, calcium-dependent phospholipase A2 that selectively hydrolyzes glycerophospholipids in the sn-2 position. Has a preference for linoleic acid at the sn-2 position. The chain is Cytosolic phospholipase A2 delta from Homo sapiens (Human).